The chain runs to 149 residues: Endothelin-1 (149 aa).

The propeptide occupies 1–33; that stretch reads AAETVVSGAELSLTANSGGEKTPPHAPGLLRRS. The segment at 6-26 is disordered; the sequence is VSGAELSLTANSGGEKTPPHA. Cystine bridges form between C36-C50 and C38-C46. Positions 57 to 149 are excised as a propeptide; sequence VNTPGHIAPY…ISQQLGNGKK (93 aa). Residues 93-107 are endothelin-like; the sequence is CQCANQKDKKCWNFC.

It belongs to the endothelin/sarafotoxin family.

The protein localises to the secreted. Endothelins are endothelium-derived vasoconstrictor peptides. Probable ligand for G-protein coupled receptors EDNRA and EDNRB which activates PTK2B, BCAR1, BCAR3 and, GTPases RAP1 and RHOA cascade in glomerular mesangial cells. Also binds the DEAR/FBXW7-AS1 receptor. Promotes mesenteric arterial wall remodeling via activation of ROCK signaling and subsequent colocalization of NFATC3 with F-actin filaments. NFATC3 then translocates to the nucleus where it subsequently promotes the transcription of the smooth muscle hypertrophy and differentiation marker ACTA2. This chain is Endothelin-1 (EDN1), found in Cavia porcellus (Guinea pig).